A 277-amino-acid polypeptide reads, in one-letter code: Phosphate import ATP-binding protein PstB (277 aa).

In terms of domain architecture, ABC transporter spans 31–272; it reads IEVPGLSLFY…PAKKQTEDYI (242 aa). 63–70 contacts ATP; that stretch reads GPSGCGKS.

The protein belongs to the ABC transporter superfamily. Phosphate importer (TC 3.A.1.7) family. The complex is composed of two ATP-binding proteins (PstB), two transmembrane proteins (PstC and PstA) and a solute-binding protein (PstS).

It localises to the cell inner membrane. The catalysed reaction is phosphate(out) + ATP + H2O = ADP + 2 phosphate(in) + H(+). Part of the ABC transporter complex PstSACB involved in phosphate import. Responsible for energy coupling to the transport system. This is Phosphate import ATP-binding protein PstB from Pseudomonas putida (Arthrobacter siderocapsulatus).